A 426-amino-acid chain; its full sequence is Peptidoglycan DD-endopeptidase ShyB (426 aa).

Positions 1 to 21 (MGQFRFLALIVAVLCFSVALF) are cleaved as a signal peptide. The span at 32-48 (SYSVPLNQSVNTSQPPS) shows a compositional bias: polar residues. The interval 32-55 (SYSVPLNQSVNTSQPPSSEMVPSD) is disordered. Residues His-291, Asp-295, and His-372 each contribute to the Zn(2+) site.

This sequence belongs to the peptidase M23B family. As to quaternary structure, monomer. Requires Zn(2+) as cofactor.

It localises to the periplasm. It functions in the pathway cell wall degradation; peptidoglycan degradation. Not inhibited by metal chelator EDTA. In terms of biological role, cell wall peptidoglycan (PG) DD-endopeptidase, which may act as a substitute for other zinc-dependent PG endopeptidases (ShyA and ShyC) during zinc starvation. Hydrolyzes peptide cross-links which covalently connect adjacent PG strands probably to allow insertion of new glycans and thus cell wall expansion. Degrades purified whole PG sacculi in vitro. It is unclear how it is able to function in low zinc environments, but that may possibly be due to binding zinc with very high affinity, utilizing an alternative metal cofactor or that it may function independently of a bound metal cofactor. This Vibrio cholerae serotype O1 (strain ATCC 39315 / El Tor Inaba N16961) protein is Peptidoglycan DD-endopeptidase ShyB.